Consider the following 642-residue polypeptide: Threonine--tRNA ligase (642 aa).

Residues 1–61 (MPVITLPDGS…ETDSTLSIIT (61 aa)) form the TGS domain. Residues 243 to 534 (DHRKIGKQLD…LTEEFAGFFP (292 aa)) form a catalytic region. Zn(2+) is bound by residues C334, H385, and H511.

It belongs to the class-II aminoacyl-tRNA synthetase family. Homodimer. Zn(2+) serves as cofactor.

It is found in the cytoplasm. The catalysed reaction is tRNA(Thr) + L-threonine + ATP = L-threonyl-tRNA(Thr) + AMP + diphosphate + H(+). Functionally, catalyzes the attachment of threonine to tRNA(Thr) in a two-step reaction: L-threonine is first activated by ATP to form Thr-AMP and then transferred to the acceptor end of tRNA(Thr). Also edits incorrectly charged L-seryl-tRNA(Thr). This is Threonine--tRNA ligase from Klebsiella pneumoniae (strain 342).